Reading from the N-terminus, the 446-residue chain is Tektin-4 (446 aa).

Coiled-coil stretches lie at residues 182 to 215, 297 to 346, and 378 to 422; these read IRNV…MDYS, DAIA…NDKS, and SEVG…ANSI.

The protein belongs to the tektin family.

It is found in the cytoplasm. The protein resides in the cytoskeleton. It localises to the cilium axoneme. Its subcellular location is the cell projection. The protein localises to the cilium. It is found in the flagellum. Microtubule inner protein (MIP) part of the dynein-decorated doublet microtubules (DMTs) in cilia and flagellar axoneme. Forms filamentous polymers in the walls of ciliary and flagellar microtubules. Contributes to normal sperm motility. In Xenopus laevis (African clawed frog), this protein is Tektin-4 (tekt4).